The chain runs to 63 residues: uncharacterized protein (63 aa).

This is an uncharacterized protein from Vaccinia virus (strain Western Reserve) (VACV).